Here is an 831-residue protein sequence, read N- to C-terminus: Phenylalanine--tRNA ligase beta subunit (831 aa).

Residues 44 to 155 (GPVDGPVTVG…GAAEPGADGA (112 aa)) form the tRNA-binding domain. The B5 domain occupies 414-489 (WSPPPIRMGV…RLEGLEVIPS (76 aa)). Residues D467, D473, E476, and E477 each coordinate Mg(2+). An FDX-ACB domain is found at 737 to 830 (SPYPAVFQDV…AAERVGAVLR (94 aa)).

Belongs to the phenylalanyl-tRNA synthetase beta subunit family. Type 1 subfamily. As to quaternary structure, tetramer of two alpha and two beta subunits. Mg(2+) serves as cofactor.

The protein resides in the cytoplasm. The catalysed reaction is tRNA(Phe) + L-phenylalanine + ATP = L-phenylalanyl-tRNA(Phe) + AMP + diphosphate + H(+). The polypeptide is Phenylalanine--tRNA ligase beta subunit (pheT) (Mycobacterium tuberculosis (strain ATCC 25618 / H37Rv)).